The sequence spans 489 residues: UDP-glycosyltransferase 85A1 (489 aa).

Residues Ser-307, 364–366, 381–389, and 403–406 each bind UDP-alpha-D-glucose; these read CPQ, HCGWNSILE, and FADQ.

Belongs to the UDP-glycosyltransferase family. Expressed in root tips, lateral root initials, root apex, shoots, leaf periphery, leaf primordia and flowers.

Involved in the O-glucosylation of trans-zeatin and dihydrozeatin. Also active in vitro on cis-zeatin. Not active on N-glucosylated substrates. This is UDP-glycosyltransferase 85A1 (UGT85A1) from Arabidopsis thaliana (Mouse-ear cress).